We begin with the raw amino-acid sequence, 716 residues long: Polyribonucleotide nucleotidyltransferase (716 aa).

Mg(2+) is bound by residues Asp495 and Asp501. In terms of domain architecture, KH spans 562–621; it reads PRLFRIQINPEQIGLVIGPGGKTIRSITEQTGAKIDIEDTGAVTISAVDADSALRAKSII. The S1 motif domain occupies 631 to 699; it reads GDVYIGKVTR…QKGRVNLTRK (69 aa).

The protein belongs to the polyribonucleotide nucleotidyltransferase family. Mg(2+) is required as a cofactor.

It is found in the cytoplasm. It carries out the reaction RNA(n+1) + phosphate = RNA(n) + a ribonucleoside 5'-diphosphate. Involved in mRNA degradation. Catalyzes the phosphorolysis of single-stranded polyribonucleotides processively in the 3'- to 5'-direction. The protein is Polyribonucleotide nucleotidyltransferase of Synechococcus elongatus (strain ATCC 33912 / PCC 7942 / FACHB-805) (Anacystis nidulans R2).